The chain runs to 117 residues: uncharacterized protein (117 aa).

Residues 10–32 (VCYLGDIAASGFLNSIATALIAV) form a helical membrane-spanning segment.

It localises to the membrane. This is an uncharacterized protein from Rickettsia conorii (strain ATCC VR-613 / Malish 7).